Here is a 115-residue protein sequence, read N- to C-terminus: ATP-dependent Clp protease adapter protein ClpS (115 aa).

It belongs to the ClpS family. As to quaternary structure, binds to the N-terminal domain of the chaperone ClpA.

In terms of biological role, involved in the modulation of the specificity of the ClpAP-mediated ATP-dependent protein degradation. This is ATP-dependent Clp protease adapter protein ClpS from Leptothrix cholodnii (strain ATCC 51168 / LMG 8142 / SP-6) (Leptothrix discophora (strain SP-6)).